A 61-amino-acid polypeptide reads, in one-letter code: Large ribosomal subunit protein uL30 (61 aa).

The protein belongs to the universal ribosomal protein uL30 family. In terms of assembly, part of the 50S ribosomal subunit.

The polypeptide is Large ribosomal subunit protein uL30 (Exiguobacterium sibiricum (strain DSM 17290 / CCUG 55495 / CIP 109462 / JCM 13490 / 255-15)).